The chain runs to 72 residues: uncharacterized protein (72 aa).

The segment at 15–62 (NNNYNNNNNNNNNNNNNNNNNNNNNNNNNNININNNNNNNNNNNNNNN) is disordered.

This is an uncharacterized protein from Dictyostelium discoideum (Social amoeba).